The primary structure comprises 466 residues: Asparagine--tRNA ligase (466 aa).

This sequence belongs to the class-II aminoacyl-tRNA synthetase family. Homodimer.

It localises to the cytoplasm. The catalysed reaction is tRNA(Asn) + L-asparagine + ATP = L-asparaginyl-tRNA(Asn) + AMP + diphosphate + H(+). The protein is Asparagine--tRNA ligase of Shewanella putrefaciens (strain CN-32 / ATCC BAA-453).